Here is a 409-residue protein sequence, read N- to C-terminus: MKIIVKIPVWMLLSLFILSPTTETIYTSGLPSLTKYFSIDGCITQITSTLYFLGFAVGILSLGRLSDIYGRRPIVLLGLFIYIVSSIISIFSVNIEMLMIARFIQAFGVSVGSVIGQSMARDSYQGAELSYVYAILSPWLLFIPSLGSYIGGYIIEYSSWHYVFVFFSLIGTILLALYYKILPETNYYIDFSQSSKYFEVFNIIIKDKILWLYAFIIGAFNGIYYGFFIEAPFILIDKMKVLPSFYGKLAFLLSFSAIFGGFLGGYLIKKRQVHDKKVMSIGFIFSLCGCILFVVNAFILEFILVSNGLAISMIFVPMMIHIIGHSLLIPITLRYALEDYAKVTGTAGSIFGAIYYIVIAAVTYCVSKIHGETISNFSLLCLVSSISSVISFYYICILYKKKSIVANEK.

The next 12 helical transmembrane spans lie at 3–23 (IIVKIPVWMLLSLFILSPTTE), 43–63 (ITQITSTLYFLGFAVGILSLG), 73–93 (PIVLLGLFIYIVSSIISIFSV), 95–115 (IEMLMIARFIQAFGVSVGSVI), 135–155 (ILSPWLLFIPSLGSYIGGYII), 162–182 (YVFVFFSLIGTILLALYYKIL), 209–229 (ILWLYAFIIGAFNGIYYGFFI), 248–268 (KLAFLLSFSAIFGGFLGGYLI), 283–303 (FIFSLCGCILFVVNAFILEFI), 309–329 (LAISMIFVPMMIHIIGHSLLI), 346–366 (TAGSIFGAIYYIVIAAVTYCV), and 379–399 (LLCLVSSISSVISFYYICILY).

Belongs to the major facilitator superfamily. Bcr/CmlA family.

It localises to the cell inner membrane. This is an uncharacterized protein from Rickettsia typhi (strain ATCC VR-144 / Wilmington).